The following is a 1208-amino-acid chain: Spindle pole body protein pcp1 (1208 aa).

The segment covering 1 to 17 has biased composition (basic and acidic residues); the sequence is MSERDFNTQSPKFKDEN. Residues 1–91 are disordered; the sequence is MSERDFNTQS…DKYNGSLGDK (91 aa). Over residues 48–64 the composition is skewed to polar residues; that stretch reads NDKSSFQTPLRNGSYQP. 4 coiled-coil regions span residues 151 to 375, 387 to 803, 874 to 1091, and 1177 to 1204; these read LREQ…KENQ, TDSM…ANIE, GTET…QSTQ, and ERMKRMKNEWLKQAQLKQSLQRAAAKAK. S906 bears the Phosphoserine mark.

As to quaternary structure, interacts with ccq1.

The protein resides in the nucleus. Its subcellular location is the cytoplasm. It is found in the cytoskeleton. It localises to the microtubule organizing center. The protein localises to the spindle pole body. Its function is as follows. Spindle pole body component that binds calmodulin. Overexpression of pcp1 causes the formation of supernumerary SPB-like structures and disrupts both mitotic spindle assembly and chromosome segregation. This Schizosaccharomyces pombe (strain 972 / ATCC 24843) (Fission yeast) protein is Spindle pole body protein pcp1 (pcp1).